Here is a 396-residue protein sequence, read N- to C-terminus: Stearoyl-[acyl-carrier-protein] 9-desaturase, chloroplastic (396 aa).

The transit peptide at 1-33 (MALRITPVTLQSERYRSFSFPKKANLRSPKFAM) directs the protein to the chloroplast. Ala-34 is modified (blocked amino end (Ala); partial). Fe cation contacts are provided by Glu-138, Glu-176, His-179, Glu-229, Glu-262, and His-265.

This sequence belongs to the fatty acid desaturase type 2 family. As to quaternary structure, homodimer. Fe(2+) serves as cofactor. Post-translationally, most of the N-terminus is blocked.

The protein localises to the plastid. It localises to the chloroplast. The enzyme catalyses octadecanoyl-[ACP] + 2 reduced [2Fe-2S]-[ferredoxin] + O2 + 2 H(+) = (9Z)-octadecenoyl-[ACP] + 2 oxidized [2Fe-2S]-[ferredoxin] + 2 H2O. It participates in lipid metabolism; fatty acid metabolism. Converts stearoyl-ACP to oleoyl-ACP by introduction of a cis double bond between carbons 9 and 10 of the acyl chain. The chain is Stearoyl-[acyl-carrier-protein] 9-desaturase, chloroplastic from Carthamus tinctorius (Safflower).